The sequence spans 1369 residues: Rho-associated protein kinase 1 (1369 aa).

An N-acetylserine modification is found at S2. The region spanning 76-338 (YEVVKVIGRG…VEEIKRHLFF (263 aa)) is the Protein kinase domain. ATP-binding positions include 82–90 (IGRGAFGEV) and K105. The Proton acceptor role is filled by D198. In terms of domain architecture, AGC-kinase C-terminal spans 341–409 (DQWAWETLRD…YSNRRYLPSA (69 aa)). The interaction with FHOD1 stretch occupies residues 368–727 (FDDLEEDKGD…KKLKEEREAR (360 aa)). A coiled-coil region spans residues 422–692 (KNVQESLQKT…RLEQEVNEHK (271 aa)). An REM-1 domain is found at 479–556 (SAVSQIEKEK…LEEANDLLRT (78 aa)). Residues 707 to 946 (EAKSVAMCEM…TVSRLEEANN (240 aa)) form an SHROOM3 binding region. The region spanning 949 to 1015 (TKDIELLRKE…LAEIMNRKDF (67 aa)) is the RhoBD domain. An RHOA binding region spans residues 998–1010 (LKTQAVNKLAEIM). Residues 1011–1102 (NRKDFKIDRK…KLLDLSDSTS (92 aa)) are a coiled coil. Phosphoserine occurs at positions 1105 and 1108. The tract at residues 1115 to 1369 (NLPVGSACIP…VVKNTSGKTS (255 aa)) is auto-inhibitory. Residues 1133–1332 (SSRIEGWLSV…WVTHLVKKIP (200 aa)) form the PH domain. The Phorbol-ester/DAG-type zinc-finger motif lies at 1243–1298 (GHEFIPTLYHFPANCEACAKPLWHVFKPPPALECRRCHVKSHRDHLDKKEDLIPPC). A Phosphoserine modification is found at S1343.

This sequence belongs to the protein kinase superfamily. AGC Ser/Thr protein kinase family. As to quaternary structure, homodimer. Interacts with GEM, MYLC2B, RHOE, LIMK1, LIMK2, TSG101, CHORDC1, DAPK3, PFN1, PTEN and JIP3. Interacts with FHOD1 in a Src-dependent manner. Interacts with ITGB1BP1 (via N-terminus and PTB domain). Interacts with RHOA (activated by GTP), RHOB, RHOC and PPP1R12A. Interacts with SHROOM3. Mg(2+) is required as a cofactor. Post-translationally, autophosphorylated on serine and threonine residues. In terms of processing, cleaved by caspase-3 during apoptosis. This leads to constitutive activation of the kinase and membrane blebbing. As to expression, highly expressed in brain, spleen, lung, liver, skeletal muscle, kidney and testis.

It localises to the cytoplasm. The protein localises to the cytoskeleton. It is found in the microtubule organizing center. Its subcellular location is the centrosome. The protein resides in the centriole. It localises to the golgi apparatus membrane. The protein localises to the cell projection. It is found in the bleb. Its subcellular location is the cell membrane. The protein resides in the lamellipodium. It localises to the ruffle. It carries out the reaction L-seryl-[protein] + ATP = O-phospho-L-seryl-[protein] + ADP + H(+). The catalysed reaction is L-threonyl-[protein] + ATP = O-phospho-L-threonyl-[protein] + ADP + H(+). Its activity is regulated as follows. Activated by RHOA binding. Inhibited by Y-27632. In terms of biological role, protein kinase which is a key regulator of the actin cytoskeleton and cell polarity. Involved in regulation of smooth muscle contraction, actin cytoskeleton organization, stress fiber and focal adhesion formation, neurite retraction, cell adhesion and motility via phosphorylation of DAPK3, GFAP, LIMK1, LIMK2, MYL9/MLC2, TPPP, PFN1 and PPP1R12A. Phosphorylates FHOD1 and acts synergistically with it to promote SRC-dependent non-apoptotic plasma membrane blebbing. Phosphorylates JIP3 and regulates the recruitment of JNK to JIP3 upon UVB-induced stress. Acts as a suppressor of inflammatory cell migration by regulating PTEN phosphorylation and stability. Acts as a negative regulator of VEGF-induced angiogenic endothelial cell activation. Required for centrosome positioning and centrosome-dependent exit from mitosis. Plays a role in terminal erythroid differentiation. Inhibits podocyte motility via regulation of actin cytoskeletal dynamics and phosphorylation of CFL1. Promotes keratinocyte terminal differentiation. Involved in osteoblast compaction through the fibronectin fibrillogenesis cell-mediated matrix assembly process, essential for osteoblast mineralization. May regulate closure of the eyelids and ventral body wall by inducing the assembly of actomyosin bundles. This chain is Rho-associated protein kinase 1 (Rock1), found in Rattus norvegicus (Rat).